Consider the following 484-residue polypeptide: UDP-N-acetylmuramoyl-L-alanyl-D-glutamate--L-lysine ligase (484 aa).

S43 serves as a coordination point for UDP-N-acetyl-alpha-D-muramoyl-L-alanyl-D-glutamate. Position 119 to 125 (119 to 125 (GTKGKTT)) interacts with ATP. UDP-N-acetyl-alpha-D-muramoyl-L-alanyl-D-glutamate is bound by residues 161 to 162 (TT), S188, and R196. K230 bears the N6-carboxylysine mark. The L-lysine recognition motif signature appears at 405 to 408 (DDPN).

This sequence belongs to the MurCDEF family. MurE subfamily. In terms of processing, carboxylation is probably crucial for Mg(2+) binding and, consequently, for the gamma-phosphate positioning of ATP.

It localises to the cytoplasm. The catalysed reaction is UDP-N-acetyl-alpha-D-muramoyl-L-alanyl-D-glutamate + L-lysine + ATP = UDP-N-acetyl-alpha-D-muramoyl-L-alanyl-gamma-D-glutamyl-L-lysine + ADP + phosphate + H(+). The protein operates within cell wall biogenesis; peptidoglycan biosynthesis. Its function is as follows. Catalyzes the addition of L-lysine to the nucleotide precursor UDP-N-acetylmuramoyl-L-alanyl-D-glutamate (UMAG) in the biosynthesis of bacterial cell-wall peptidoglycan. The protein is UDP-N-acetylmuramoyl-L-alanyl-D-glutamate--L-lysine ligase of Streptococcus agalactiae serotype III (strain NEM316).